Reading from the N-terminus, the 434-residue chain is MIVERVEEYLDRIEKINKDINALIEVKPEKVLEEAKKLEKDEKAKKKPLYGKIIVVKANINVEGYTISCASKTLENYIAPYDATVIEKIKENGGLIIGIANMDEFACGSSGETSYFGPTKNPRAKDRIPGGSSSGSAAAVSADLCDMALGSDTGGSIRNPASHCGVVGFKPSYGVVSRYGLCDLAMSFDQIGPLTKTAEDALLLTNIIKGKDLRDTTTVETKPFEKKDIKGFKVGVVKEFMDVADEKIRDKVEKAIEVFKDLGCEIVELSYKYVDLALPTYYLINYVEFFSSTRRYDGRRYGYKIEEVCGEEVLRRIMIGSMISQKEYSGKYYKNALKARNLMRNEMIKIMKDVDIIVGATVPKLPHKLGEKLTPMEMYSYDVLTVPANICGLCAGVVPCGDINGIPVGLQIQGKPFEDEKVLSAMIAFEKAME.

Residues K57 and S132 each act as charge relay system in the active site. The active-site Acyl-ester intermediate is S156.

Belongs to the amidase family. GatA subfamily. Heterotrimer of A, B and C subunits.

It catalyses the reaction L-glutamyl-tRNA(Gln) + L-glutamine + ATP + H2O = L-glutaminyl-tRNA(Gln) + L-glutamate + ADP + phosphate + H(+). Allows the formation of correctly charged Gln-tRNA(Gln) through the transamidation of misacylated Glu-tRNA(Gln) in organisms which lack glutaminyl-tRNA synthetase. The reaction takes place in the presence of glutamine and ATP through an activated gamma-phospho-Glu-tRNA(Gln). This is Glutamyl-tRNA(Gln) amidotransferase subunit A (gatA) from Methanocaldococcus jannaschii (strain ATCC 43067 / DSM 2661 / JAL-1 / JCM 10045 / NBRC 100440) (Methanococcus jannaschii).